We begin with the raw amino-acid sequence, 105 residues long: uncharacterized protein (105 aa).

A Cupin type-2 domain is found at 33–100 (LYALDAGTTD…SEDLRVLVVF (68 aa)).

This is an uncharacterized protein from Streptomyces coelicolor (strain ATCC BAA-471 / A3(2) / M145).